The primary structure comprises 1485 residues: Glutamate receptor ionotropic, NMDA 2B (1485 aa).

The N-terminal stretch at 1–26 (MKPRAECCSPKFWLVLAVLAVSGSRA) is a signal peptide. At 27-557 (RSQKSPPSIG…SAFLEPFSAD (531 aa)) the chain is on the extracellular side. N-linked (GlcNAc...) asparagine glycosylation is present at asparagine 74. Cysteine 86 and cysteine 321 are disulfide-bonded. Residues histidine 127 and glutamate 284 each coordinate Zn(2+). Asparagine 341, asparagine 348, asparagine 444, and asparagine 491 each carry an N-linked (GlcNAc...) asparagine glycan. 2 cysteine pairs are disulfide-bonded: cysteine 429–cysteine 456 and cysteine 436–cysteine 457. L-glutamate is bound by residues threonine 514 and arginine 519. N-linked (GlcNAc...) asparagine glycosylation is present at asparagine 542. Residues 558–576 (VWVMMFVMLLIVSAVAVFV) form a helical membrane-spanning segment. The Cytoplasmic portion of the chain corresponds to 577 to 603 (FEYFSPVGYNRCLADGREPGGPSFTIG). The segment at residues 604-623 (KAIWLLWGLVFNNSVPVQNP) is an intramembrane region (discontinuously helical). Residues 604-623 (KAIWLLWGLVFNNSVPVQNP) are pore-forming. At 624-630 (KGTTSKI) the chain is on the cytoplasmic side. Residues 631–646 (MVSVWAFFAVIFLASY) traverse the membrane as a helical segment. The Extracellular segment spans residues 647-817 (TANLAAFMIQ…VMSSQLDIDN (171 aa)). A glycan (N-linked (GlcNAc...) asparagine) is linked at asparagine 688. Residues 690–691 (ST) and aspartate 732 each bind L-glutamate. Residues cysteine 746 and cysteine 801 are joined by a disulfide bond. A helical transmembrane segment spans residues 818 to 837 (MAGVFYMLGAAMALSLITFI). At 838–1485 (CEHLFYWQFR…EKLSSIESDV (648 aa)) the chain is on the cytoplasmic side. A phosphoserine mark is found at serine 882, serine 886, serine 917, and serine 920. A phosphotyrosine mark is found at tyrosine 962 and tyrosine 1039. A phosphoserine mark is found at serine 1058, serine 1061, and serine 1064. The segment at 1074–1097 (EGNAAKRRKQQYKDSLKKRPASAK) is disordered. 2 positions are modified to phosphotyrosine: tyrosine 1109 and tyrosine 1133. Serine 1143 is subject to Phosphoserine. Residue tyrosine 1155 is modified to Phosphotyrosine. Residues 1162–1194 (FKRDSVSGGGPCTNRSHLKHGAGDKHGVVSGVP) are disordered. Residues serine 1255 and serine 1259 each carry the phosphoserine modification. Positions 1269–1278 (PVAVPSNAPS) are enriched in low complexity. Positions 1269–1302 (PVAVPSNAPSTKYPQSPTNSKAQKKTRNKLRRQH) are disordered. A compositionally biased stretch (polar residues) spans 1280–1289 (KYPQSPTNSK). A compositionally biased stretch (basic residues) spans 1290–1301 (AQKKTRNKLRRQ). Positions 1292-1304 (KKTRNKLRRQHSY) are interaction with DAPK1. Serine 1303 carries the phosphoserine; by DAPK1 modification. Tyrosine 1475 carries the phosphotyrosine modification. Residues 1483 to 1485 (SDV) carry the PDZ-binding motif.

This sequence belongs to the glutamate-gated ion channel (TC 1.A.10.1) family. NR2B/GRIN2B subfamily. As to quaternary structure, heterotetramer. Forms heterotetrameric channels composed of two GluN1/zeta subunits (GRIN1), and two identical GluN2/epsilon subunits (GRIN2A, GRIN2B, GRIN2C or GRIN2D) or GluN3 subunits (GRIN3A or GRIN3B) (in vitro). Can also form heterotetrameric channels that contain at least two GluN1 subunits and at least two different GluN2 subunits (or a combination of one GluN2 and one GluN3 subunits) (in vitro). In vivo, the subunit composition may depend on the expression levels of the different subunits. Found in a complex with GRIN1, GRIN3A and PPP2CB. Found in a complex with GRIN1 and GRIN3B. Interacts with MAGI3. Interacts with HIP1 and Neto1. Interacts with PDZ domains of PATJ, DLG3 and DLG4. Interacts with DAPK1. Found in a complex with GRIN1 and PRR7. Interacts with PRR7. Interacts with CAMK2A. Interacts with ARC; preventing ARC oligomerization. Interacts with TMEM25. Interacts (via the extreme C-terminus) with FRMPD2 (via the second PDZ domain); the interaction is direct and is likely to promote NMDAR-mediated neural signal transmission. Interacts with FAM81A; the interaction facilitates condensate formation via liquid-liquid phase separation. Post-translationally, phosphorylated on tyrosine residues. Phosphorylation at Ser-1303 by DAPK1 enhances synaptic NMDA receptor channel activity.

Its subcellular location is the cell membrane. It localises to the postsynaptic cell membrane. The protein resides in the cell projection. It is found in the dendrite. The protein localises to the late endosome. Its subcellular location is the lysosome. It localises to the cytoplasm. The protein resides in the cytoskeleton. The catalysed reaction is Ca(2+)(in) = Ca(2+)(out). It catalyses the reaction Na(+)(in) = Na(+)(out). The enzyme catalyses K(+)(in) = K(+)(out). In terms of biological role, component of N-methyl-D-aspartate (NMDA) receptors (NMDARs) that function as heterotetrameric, ligand-gated cation channels with high calcium permeability and voltage-dependent block by Mg(2+). Participates in synaptic plasticity for learning and memory formation by contributing to the long-term depression (LTD) of hippocampus membrane currents. Channel activation requires binding of the neurotransmitter L-glutamate to the GluN2 subunit, glycine or D-serine binding to the GluN1 subunit, plus membrane depolarization to eliminate channel inhibition by Mg(2+). NMDARs mediate simultaneously the potasium efflux and the influx of calcium and sodium. Each GluN2 subunit confers differential attributes to channel properties, including activation, deactivation and desensitization kinetics, pH sensitivity, Ca2(+) permeability, and binding to allosteric modulators. In concert with DAPK1 at extrasynaptic sites, acts as a central mediator for stroke damage. Its phosphorylation at Ser-1303 by DAPK1 enhances synaptic NMDA receptor channel activity inducing injurious Ca2+ influx through them, resulting in an irreversible neuronal death. The chain is Glutamate receptor ionotropic, NMDA 2B from Canis lupus familiaris (Dog).